A 46-amino-acid polypeptide reads, in one-letter code: Defensin Tk-AMP-D5 (46 aa).

Cystine bridges form between Cys-3–Cys-46, Cys-14–Cys-34, Cys-20–Cys-40, and Cys-24–Cys-42.

Functionally, plant defense peptide. This chain is Defensin Tk-AMP-D5, found in Triticum kiharae (Wheat).